The chain runs to 131 residues: Protein FAM107B (131 aa).

Ala2 bears the N-acetylalanine mark. Disordered stretches follow at residues 39 to 78 and 100 to 131; these read MNQK…KKKS and KLQE…AQES. Lys50 is subject to N6-acetyllysine. Positions 52–78 are enriched in basic and acidic residues; the sequence is ELQKVMEKRKRDQVIKQKEEEAQKKKS. Positions 61 to 112 form a coiled coil; sequence KRDQVIKQKEEEAQKKKSDLEIELLKRQQKLEQLELEKQKLQEEQENAPEFV.

The protein belongs to the FAM107 family.

This Homo sapiens (Human) protein is Protein FAM107B.